The chain runs to 262 residues: 3-deoxy-manno-octulosonate cytidylyltransferase (262 aa).

It belongs to the KdsB family.

It localises to the cytoplasm. It catalyses the reaction 3-deoxy-alpha-D-manno-oct-2-ulosonate + CTP = CMP-3-deoxy-beta-D-manno-octulosonate + diphosphate. The protein operates within nucleotide-sugar biosynthesis; CMP-3-deoxy-D-manno-octulosonate biosynthesis; CMP-3-deoxy-D-manno-octulosonate from 3-deoxy-D-manno-octulosonate and CTP: step 1/1. It functions in the pathway bacterial outer membrane biogenesis; lipopolysaccharide biosynthesis. Its function is as follows. Activates KDO (a required 8-carbon sugar) for incorporation into bacterial lipopolysaccharide in Gram-negative bacteria. The protein is 3-deoxy-manno-octulosonate cytidylyltransferase of Blochmanniella pennsylvanica (strain BPEN).